A 395-amino-acid polypeptide reads, in one-letter code: S-adenosylmethionine synthase (395 aa).

His-16 is an ATP binding site. Asp-18 lines the Mg(2+) pocket. Glu-44 contributes to the K(+) binding site. L-methionine is bound by residues Glu-57 and Gln-100. The interval 100–110 (QSPDIAQGVDR) is flexible loop. ATP contacts are provided by residues 167 to 169 (DAK), 233 to 234 (RF), Asp-242, 248 to 249 (RK), Ala-265, and Lys-269. An L-methionine-binding site is contributed by Asp-242. Residue Lys-273 participates in L-methionine binding.

This sequence belongs to the AdoMet synthase family. In terms of assembly, homotetramer; dimer of dimers. Mg(2+) serves as cofactor. K(+) is required as a cofactor.

Its subcellular location is the cytoplasm. The enzyme catalyses L-methionine + ATP + H2O = S-adenosyl-L-methionine + phosphate + diphosphate. It participates in amino-acid biosynthesis; S-adenosyl-L-methionine biosynthesis; S-adenosyl-L-methionine from L-methionine: step 1/1. Catalyzes the formation of S-adenosylmethionine (AdoMet) from methionine and ATP. The overall synthetic reaction is composed of two sequential steps, AdoMet formation and the subsequent tripolyphosphate hydrolysis which occurs prior to release of AdoMet from the enzyme. The protein is S-adenosylmethionine synthase of Burkholderia lata (strain ATCC 17760 / DSM 23089 / LMG 22485 / NCIMB 9086 / R18194 / 383).